Reading from the N-terminus, the 876-residue chain is MACRFPLHSSSPSQFLSPENRQRLPRNYPSISCQNNSATNVVHEDGDDNDKAKTNQVNLLAIPITLTIISASLAKPSFAAAKVTERKRTQKKPQEALTLEQLKAWSKDLPVVSNRIPYTDILSLKAEGKLKHVIKPPNLSLRQKAEPVLVVLEDSRVLRTVLPSLEGNKRFWEQWDELGIDVQCVNAYTPPVKRPPVPSPYLGFLWKVPAYMLTWVKPKKESKRAAELKRMREDFKRQRKEEIETMKEERVMMEKTMKAQKKQQERKKRKAVRKKKYEESLREARKNYRDMADMWARLAQDPNVATALGLVFFYIFYRVVVLNYRKQKKDYEDRLKIEKAEADERKKMRELEREMEGIEEEDEEVEEGTGEKNPYLQMAMQFMKSGARVRRASNKRLPEYLERGVDVKFTDVAGLGKIRLELEEIVKFFTHGEMYRRRGVKIPGGILLCGPPGVGKTLLAKAVAGEAGVNFFSISASQFVEIYVGVGASRVRALYQEARENAPSVVFIDELDAVGRERGLIKGSGGQERDATLNQLLVSLDGFEGRGEVITIASTNRPDILDPALVRPGRFDRKIFIPKPGLIGRMEILQVHARKKPMAEDLDYMAVASMTDGMVGAELANIVEIAAINMMRDGRTELTTDDLLQAAQIEERGMLDRKDRSLETWRQVAINEAAMAVVAVNFPDMKNIEFLTINPRAGRELGYVRVKMDHIKFKEGMLSRQSILDHITVQLAPRAADELWYGEDQLSTIWAETSDNARSAARSLVLGGLSDKHHGLNNFWVADRINDIDVEALRILNMCYERAKEILGRNRTLMDEVVEKLVQKKSLTKQEFFTLVELYGSSKPMPPSILELRKIKRLELEEMVLKLDMTTARNSS.

The segment at 1 to 20 (MACRFPLHSSSPSQFLSPEN) is disordered. The transit peptide at 1–32 (MACRFPLHSSSPSQFLSPENRQRLPRNYPSIS) directs the protein to the chloroplast. Residues 8–19 (HSSSPSQFLSPE) are compositionally biased toward polar residues. Residues 59–79 (LLAIPITLTIISASLAKPSFA) traverse the membrane as a helical segment. Positions 256-276 (TMKAQKKQQERKKRKAVRKKK) are disordered. The segment covering 258-275 (KAQKKQQERKKRKAVRKK) has biased composition (basic residues). Residues 304 to 324 (VATALGLVFFYIFYRVVVLNY) traverse the membrane as a helical segment. Positions 350–370 (ELEREMEGIEEEDEEVEEGTG) are disordered. Residues 357–368 (GIEEEDEEVEEG) show a composition bias toward acidic residues. 450–457 (GPPGVGKT) provides a ligand contact to ATP.

It in the N-terminal section; belongs to the AAA ATPase family. The protein in the C-terminal section; belongs to the peptidase M41 family. Homooligomer. Interacts with FtsHi4.

The protein localises to the plastid. The protein resides in the chloroplast membrane. Required for plastid development during embryogenesis. Might be involved in chaperone functions or play a structural role in the thylakoid FtsH complex. The protein is Probable inactive ATP-dependent zinc metalloprotease FTSHI 2, chloroplastic of Arabidopsis thaliana (Mouse-ear cress).